A 455-amino-acid chain; its full sequence is MSLDIVILAAGQGTRMRSALPKVLHPVAGNSMLGHVIHSARQLSPVGIHVVIGHGADAVREQLAADDLNFVMQDKQLGTGHAVAQALPALTAETVLILYGDVPLIEVETLQRLLKRVTPEQLGLLTVKLDDPTGYGRIVRDDQHRVCAIVEHKDATDAQKAITEGNTGILAVPASHLQDWLGRLSNNNAQGEYYLTDVIAMAVNDGLVVATEQPHDAMEVQGANDRKQLSELERHYQLREARRLMAAGVTLRDPSRFDVRGEVSVGRDVLIDINVILEGKVIIEDDVVIGPNCVIKDSTLRKGVVVKANSHIDGALLGECSDAGPFARLRPGSVLGAKAHVGNFVELKNANLGEGAKVGHLTYLGDAEVGARTNIGAGTITCNYDGANKHKTTLGADVFIGSNNSLVAPVDILDGATTAAGSTITQNVPAEQLGVARARQRNIEGWKRPVKITKD.

Residues 1-226 (MSLDIVILAA…AMEVQGANDR (226 aa)) form a pyrophosphorylase region. UDP-N-acetyl-alpha-D-glucosamine is bound by residues 8-11 (LAAG), K22, Q73, 78-79 (GT), 99-101 (YGD), G136, E151, N166, and N224. D101 contacts Mg(2+). N224 lines the Mg(2+) pocket. The linker stretch occupies residues 227-247 (KQLSELERHYQLREARRLMAA). The segment at 248–455 (GVTLRDPSRF…WKRPVKITKD (208 aa)) is N-acetyltransferase. UDP-N-acetyl-alpha-D-glucosamine contacts are provided by R330 and K348. H360 (proton acceptor) is an active-site residue. Y363 and N374 together coordinate UDP-N-acetyl-alpha-D-glucosamine. Acetyl-CoA contacts are provided by residues A377, 383–384 (NY), S402, A420, and R437.

In the N-terminal section; belongs to the N-acetylglucosamine-1-phosphate uridyltransferase family. The protein in the C-terminal section; belongs to the transferase hexapeptide repeat family. Homotrimer. Requires Mg(2+) as cofactor.

The protein resides in the cytoplasm. The enzyme catalyses alpha-D-glucosamine 1-phosphate + acetyl-CoA = N-acetyl-alpha-D-glucosamine 1-phosphate + CoA + H(+). It catalyses the reaction N-acetyl-alpha-D-glucosamine 1-phosphate + UTP + H(+) = UDP-N-acetyl-alpha-D-glucosamine + diphosphate. The protein operates within nucleotide-sugar biosynthesis; UDP-N-acetyl-alpha-D-glucosamine biosynthesis; N-acetyl-alpha-D-glucosamine 1-phosphate from alpha-D-glucosamine 6-phosphate (route II): step 2/2. It participates in nucleotide-sugar biosynthesis; UDP-N-acetyl-alpha-D-glucosamine biosynthesis; UDP-N-acetyl-alpha-D-glucosamine from N-acetyl-alpha-D-glucosamine 1-phosphate: step 1/1. Its pathway is bacterial outer membrane biogenesis; LPS lipid A biosynthesis. Its function is as follows. Catalyzes the last two sequential reactions in the de novo biosynthetic pathway for UDP-N-acetylglucosamine (UDP-GlcNAc). The C-terminal domain catalyzes the transfer of acetyl group from acetyl coenzyme A to glucosamine-1-phosphate (GlcN-1-P) to produce N-acetylglucosamine-1-phosphate (GlcNAc-1-P), which is converted into UDP-GlcNAc by the transfer of uridine 5-monophosphate (from uridine 5-triphosphate), a reaction catalyzed by the N-terminal domain. This is Bifunctional protein GlmU from Pseudomonas syringae pv. tomato (strain ATCC BAA-871 / DC3000).